A 389-amino-acid chain; its full sequence is Chalcone synthase 2 (389 aa).

Cys164 is a catalytic residue.

It belongs to the thiolase-like superfamily. Chalcone/stilbene synthases family.

It carries out the reaction (E)-4-coumaroyl-CoA + 3 malonyl-CoA + 3 H(+) = 2',4,4',6'-tetrahydroxychalcone + 3 CO2 + 4 CoA. Its pathway is secondary metabolite biosynthesis; flavonoid biosynthesis. In terms of biological role, the primary product of this enzyme is 4,2',4',6'-tetrahydroxychalcone (also termed naringenin-chalcone or chalcone) which can under specific conditions spontaneously isomerize into naringenin. This is Chalcone synthase 2 (CHS2) from Pisum sativum (Garden pea).